The sequence spans 327 residues: Glycerol-3-phosphate dehydrogenase [NAD(P)+] (327 aa).

NADPH-binding residues include Trp11, His30, and Lys103. Residues Lys103, Gly131, and Ser133 each coordinate sn-glycerol 3-phosphate. Position 135 (Ala135) interacts with NADPH. 5 residues coordinate sn-glycerol 3-phosphate: Lys186, Asp243, Ser253, Arg254, and Asn255. Lys186 serves as the catalytic Proton acceptor. Arg254 is a binding site for NADPH. Residues Val281 and Glu283 each contribute to the NADPH site.

It belongs to the NAD-dependent glycerol-3-phosphate dehydrogenase family.

The protein resides in the cytoplasm. It carries out the reaction sn-glycerol 3-phosphate + NAD(+) = dihydroxyacetone phosphate + NADH + H(+). It catalyses the reaction sn-glycerol 3-phosphate + NADP(+) = dihydroxyacetone phosphate + NADPH + H(+). The protein operates within membrane lipid metabolism; glycerophospholipid metabolism. Functionally, catalyzes the reduction of the glycolytic intermediate dihydroxyacetone phosphate (DHAP) to sn-glycerol 3-phosphate (G3P), the key precursor for phospholipid synthesis. The chain is Glycerol-3-phosphate dehydrogenase [NAD(P)+] from Wolbachia sp. subsp. Brugia malayi (strain TRS).